The primary structure comprises 231 residues: Small ribosomal subunit protein uS3 (231 aa).

One can recognise a KH type-2 domain in the interval 39–107; it reads IRKFIMKTLP…GVSLNIVEIR (69 aa).

This sequence belongs to the universal ribosomal protein uS3 family. Part of the 30S ribosomal subunit. Forms a tight complex with proteins S10 and S14.

In terms of biological role, binds the lower part of the 30S subunit head. Binds mRNA in the 70S ribosome, positioning it for translation. The chain is Small ribosomal subunit protein uS3 from Zymomonas mobilis subsp. mobilis (strain ATCC 31821 / ZM4 / CP4).